Reading from the N-terminus, the 393-residue chain is MASVDELQKKIKELEAKLAAVEAKGGPMRQKIEVMSSEVVDSNPYSRLMALKRMGIVNNYEQIREKTVAVVGVGGVGSVTAEMLTRCGIGKLILFDYDKVELANMNRLFFQPHQAGLSKVDAAAATLQNINPDVTIDAYNYNITTVDNFQKFCDTISKGSLTGGAVDLVLSCVDNFEARMAINTACNELDQKWFESGVSENAVSGHIQFISPGESACFACAPPLVVATKVDERTLKREGVCAASLPTTMGIVAGFLVQNSLKYLLEFGNVTHYLGYSALTDFFPTMSLQPNPTCDDASCRARQEQRRLQPRVELAAEVTEDCGPVHQDNDWGISVLEENSPADEDCPGLKLVDGVQVAYSIPVDSSTPESSTGGAVAASELSLEDLMQQMKTM.

The ATP site is built by Gly-75, Asp-96, Lys-119, Asn-142, and Asn-175. Zn(2+)-binding residues include Cys-217 and Cys-220. Cys-241 (glycyl thioester intermediate) is an active-site residue. Zn(2+) contacts are provided by Cys-294 and Cys-299.

The protein belongs to the ubiquitin-activating E1 family. UBA5 subfamily.

Its function is as follows. E1-like enzyme which activates UFM1. The polypeptide is Ubiquitin-like modifier-activating enzyme 5 (Bombyx mori (Silk moth)).